The primary structure comprises 251 residues: Probable transcriptional regulatory protein CC_3243 (251 aa).

Belongs to the TACO1 family.

The protein resides in the cytoplasm. The polypeptide is Probable transcriptional regulatory protein CC_3243 (Caulobacter vibrioides (strain ATCC 19089 / CIP 103742 / CB 15) (Caulobacter crescentus)).